Reading from the N-terminus, the 659-residue chain is Serine/threonine-protein kinase StkP (659 aa).

At 1 to 342 (MIQIGKIFAG…PQAPKKHRFK (342 aa)) the chain is on the cytoplasmic side. One can recognise a Protein kinase domain in the interval 12-273 (YRIVKQIGRG…EMYVDLSSSL (262 aa)). Residues 18–26 (IGRGGMADV) and Lys42 each bind ATP. Asp136 acts as the Proton acceptor in catalysis. The chain crosses the membrane as a helical span at residues 343 to 363 (MRYLILLASLVLVAASLIWIL). Topologically, residues 364-659 (SRTPATIAIP…YKPKTTSATP (296 aa)) are extracellular. PASTA domains are found at residues 366 to 433 (TPAT…VVSS), 434 to 505 (GKQS…TVAK), 506 to 577 (KATT…TVAK), and 578 to 651 (KVTS…SIYK). The tract at residues 541–561 (EEESSESEPGTIMKQSPGAGT) is disordered.

It belongs to the protein kinase superfamily. Ser/Thr protein kinase family. As to quaternary structure, homodimer. StkP forms dimers through its transmembrane and extracellular domains. Dimer formation likely promotes autophosphorylation activity and might be necessary for targeting StkP substrate. Autophosphorylation occurs predominantly at the threonine residue and weakly at the serine residue. Dephosphorylated by PhpP.

The protein localises to the cell membrane. It carries out the reaction L-seryl-[protein] + ATP = O-phospho-L-seryl-[protein] + ADP + H(+). The enzyme catalyses L-threonyl-[protein] + ATP = O-phospho-L-threonyl-[protein] + ADP + H(+). In terms of biological role, protein kinase involved in signal transduction pathways that regulate various cellular processes. Likely senses intracellular peptidoglycan subunits present in the cell division septa of actively growing cells; thus, intracellular unlinked peptidoglycan may serve as the signal molecules that trigger StkP phosphorylation activity on a set of substrates. Plays a crucial role in the regulation of cell shape and cell division of S.pneumoniae through control of at least DivIVA activity. Is involved in competence triggering, and is required for the expression of the central competence operon comCDE. StkP also plays an important role for bacterial survival in vivo. Identified target substrates that are specifically phosphorylated by StkP in vivo, mainly on threonine residues, are DivIVA, GlmM, PpaC, MapZ, KhpB (also called EloR/Jag, shown in strains R6 and Rx1) and StkP itself. Autophosphorylated StkP is a substrate for the cotranscribed protein phosphatase PhpP (shown in the avirulent strain Rx / Cp1015); PhpP and StkP appear to constitute a functional signaling couple in vivo. The sequence is that of Serine/threonine-protein kinase StkP (stkP) from Streptococcus pneumoniae serotype 2 (strain D39 / NCTC 7466).